Consider the following 159-residue polypeptide: Protein-export protein SecB (159 aa).

Belongs to the SecB family. As to quaternary structure, homotetramer, a dimer of dimers. One homotetramer interacts with 1 SecA dimer.

It localises to the cytoplasm. Functionally, one of the proteins required for the normal export of preproteins out of the cell cytoplasm. It is a molecular chaperone that binds to a subset of precursor proteins, maintaining them in a translocation-competent state. It also specifically binds to its receptor SecA. This is Protein-export protein SecB from Aromatoleum aromaticum (strain DSM 19018 / LMG 30748 / EbN1) (Azoarcus sp. (strain EbN1)).